A 237-amino-acid polypeptide reads, in one-letter code: Sugar fermentation stimulation protein homolog (237 aa).

It belongs to the SfsA family.

The chain is Sugar fermentation stimulation protein homolog from Pseudomonas putida (strain GB-1).